An 80-amino-acid polypeptide reads, in one-letter code: Protein KorB (80 aa).

2 consecutive DNA-binding regions (H-T-H motif) follow at residues 13–32 and 56–75; these read AEAA…AELD and NEVT…AEAE.

Its function is as follows. Repressor for the transcription of certain pIJ101 promoters, including those the from kilA and kilB loci. This is Protein KorB (korB) from Streptomyces lividans.